Here is a 282-residue protein sequence, read N- to C-terminus: Bis(5'-nucleosyl)-tetraphosphatase, symmetrical (282 aa).

This sequence belongs to the Ap4A hydrolase family.

The catalysed reaction is P(1),P(4)-bis(5'-adenosyl) tetraphosphate + H2O = 2 ADP + 2 H(+). Its function is as follows. Hydrolyzes diadenosine 5',5'''-P1,P4-tetraphosphate to yield ADP. In Escherichia coli O45:K1 (strain S88 / ExPEC), this protein is Bis(5'-nucleosyl)-tetraphosphatase, symmetrical.